A 199-amino-acid chain; its full sequence is Holliday junction branch migration complex subunit RuvA (199 aa).

The domain I stretch occupies residues 1 to 65 (MIGWLHGQII…EDALLLYGFL (65 aa)). A domain II region spans residues 66–144 (DKEERSLFRS…QFDGSVSDTF (79 aa)). The flexible linker stretch occupies residues 144–148 (FQKQA). The interval 149–199 (GSTHSQQEAISALEALGYKPQEAWKVVNKIDNGNKSCEQLIREALQILSSR) is domain III.

It belongs to the RuvA family. In terms of assembly, homotetramer. Forms an RuvA(8)-RuvB(12)-Holliday junction (HJ) complex. HJ DNA is sandwiched between 2 RuvA tetramers; dsDNA enters through RuvA and exits via RuvB. An RuvB hexamer assembles on each DNA strand where it exits the tetramer. Each RuvB hexamer is contacted by two RuvA subunits (via domain III) on 2 adjacent RuvB subunits; this complex drives branch migration. In the full resolvosome a probable DNA-RuvA(4)-RuvB(12)-RuvC(2) complex forms which resolves the HJ.

Its subcellular location is the cytoplasm. The RuvA-RuvB-RuvC complex processes Holliday junction (HJ) DNA during genetic recombination and DNA repair, while the RuvA-RuvB complex plays an important role in the rescue of blocked DNA replication forks via replication fork reversal (RFR). RuvA specifically binds to HJ cruciform DNA, conferring on it an open structure. The RuvB hexamer acts as an ATP-dependent pump, pulling dsDNA into and through the RuvAB complex. HJ branch migration allows RuvC to scan DNA until it finds its consensus sequence, where it cleaves and resolves the cruciform DNA. This Legionella pneumophila (strain Paris) protein is Holliday junction branch migration complex subunit RuvA.